A 553-amino-acid polypeptide reads, in one-letter code: MWRGVPGCLRDIVQWQVALWSHSFVRTWGSCGKAMTEALSAQAEAAGGLKALVQPNGDAGSNTSGEPLLERLEPAAVGKQVPESGDQAQGGEGQLPSNGEQTPAPVADSGKRKKRRGATGERVVPPPKKRRTGVSFSDEHFAETTYYFEGGLRKVRPYYFDFQTYCKGRWVGRSLLHVFSTEFRSQPLSYYEAAVRAGRLHLNEEPVQDLSIVLKDNDFLRNTVHRHEPPVTAEPIHLLAENNDVVVIDKPSSIPVHPCGRFRHNTVIFILGKEHQLKELHPLHRLDRLTSGVLMFAKTAAVSEKIHEQVRDRQLEKEYVCRVAGEFPDKEVICKEPILVVSYKVGVCRVDPRGKPCETVFQRLSYNGRSSVVQCRPLTGRTHQIRVHLQFLGHPILNDPIYNSTAWGPSRGQGGHIPKTDEELLRDLVAEHQAKESLSMLDLCESDLTPGLIDSTAPSSELAKDSLEGLATAAQKIDGIAEAAPQHLDTPEKAAKADVTQETDPLCAECRVLRQDPLPQDLVMFLHALRYKGPDFEYVSPIPAWARDDWQED.

The segment at 76 to 135 (AVGKQVPESGDQAQGGEGQLPSNGEQTPAPVADSGKRKKRRGATGERVVPPPKKRRTGVS) is disordered. D287 is an active-site residue. Residue T490 is modified to Phosphothreonine.

It belongs to the pseudouridine synthase RluA family.

The catalysed reaction is a uridine in mRNA = a pseudouridine in mRNA. Functionally, pseudouridine synthase that catalyzes pseudouridylation of mRNAs. This chain is Pseudouridylate synthase RPUSD2, found in Mus musculus (Mouse).